The following is a 101-amino-acid chain: Small ribosomal subunit protein uS14 (101 aa).

The protein belongs to the universal ribosomal protein uS14 family. As to quaternary structure, part of the 30S ribosomal subunit. Contacts proteins S3 and S10.

Binds 16S rRNA, required for the assembly of 30S particles and may also be responsible for determining the conformation of the 16S rRNA at the A site. The sequence is that of Small ribosomal subunit protein uS14 from Cronobacter sakazakii (strain ATCC BAA-894) (Enterobacter sakazakii).